A 409-amino-acid polypeptide reads, in one-letter code: Multifunctional CCA protein (409 aa).

The ATP site is built by G8 and R11. 2 residues coordinate CTP: G8 and R11. The Mg(2+) site is built by D21 and D23. R91, R137, and R140 together coordinate ATP. 3 residues coordinate CTP: R91, R137, and R140. Residues 228–329 (TGVHTLSVLE…LELLQSFDVY (102 aa)) form the HD domain.

The protein belongs to the tRNA nucleotidyltransferase/poly(A) polymerase family. Bacterial CCA-adding enzyme type 1 subfamily. In terms of assembly, monomer. Can also form homodimers and oligomers. Mg(2+) serves as cofactor. Ni(2+) is required as a cofactor.

The catalysed reaction is a tRNA precursor + 2 CTP + ATP = a tRNA with a 3' CCA end + 3 diphosphate. It carries out the reaction a tRNA with a 3' CCA end + 2 CTP + ATP = a tRNA with a 3' CCACCA end + 3 diphosphate. Functionally, catalyzes the addition and repair of the essential 3'-terminal CCA sequence in tRNAs without using a nucleic acid template. Adds these three nucleotides in the order of C, C, and A to the tRNA nucleotide-73, using CTP and ATP as substrates and producing inorganic pyrophosphate. tRNA 3'-terminal CCA addition is required both for tRNA processing and repair. Also involved in tRNA surveillance by mediating tandem CCA addition to generate a CCACCA at the 3' terminus of unstable tRNAs. While stable tRNAs receive only 3'-terminal CCA, unstable tRNAs are marked with CCACCA and rapidly degraded. The polypeptide is Multifunctional CCA protein (Pseudomonas fluorescens (strain SBW25)).